The primary structure comprises 218 residues: Non-structural protein NS3 (218 aa).

This sequence belongs to the orbivirus NS3 family.

Functionally, may play a role in the release of virions from infected cells. In Camelus dromedarius (Dromedary), this protein is Non-structural protein NS3 (Segment-10).